We begin with the raw amino-acid sequence, 2465 residues long: Protein DOP1A (2465 aa).

Disordered regions lie at residues 559–600 (PSGQ…SSES), 625–646 (GAAA…TVGS), and 705–733 (TEHQ…KEKN). Low complexity predominate over residues 633 to 646 (STSSETETASTVGS). The segment covering 707-733 (HQGDLGREQGETSKWDRNSQGDVKEKN) has biased composition (basic and acidic residues). Serine 1266 bears the Phosphoserine mark. Basic and acidic residues-rich tracts occupy residues 1282-1291 (EKETIVKESG) and 1305-1315 (KKDDDKKKSSN). The disordered stretch occupies residues 1282-1315 (EKETIVKESGKQPGAKPKVKLARKKDDDKKKSSN).

Belongs to the DOP1 family.

The protein resides in the golgi apparatus membrane. Functionally, may be involved in protein traffic between late Golgi and early endosomes. The sequence is that of Protein DOP1A from Homo sapiens (Human).